A 111-amino-acid chain; its full sequence is TPR repeat-containing protein associated with Hsp90 (111 aa).

N-acetylserine is present on S2. TPR repeat units lie at residues 4–37 (FEKQKEQGNSLFKQGLYREAVHCYDQLITAQPQN) and 39–71 (VGYSNKAMALIKLGEYTQAIQMCQQGLRYTSTA).

As to quaternary structure, component of the R2TP complex composed at least of RVB1, RVB2, TAH1 and PIH1. Also interacts with HSP90.

The protein resides in the cytoplasm. Its subcellular location is the nucleus. This is TPR repeat-containing protein associated with Hsp90 (TAH1) from Saccharomyces cerevisiae (strain ATCC 204508 / S288c) (Baker's yeast).